A 439-amino-acid polypeptide reads, in one-letter code: MVASARGLRTLHSAHSSISALPASTVPRLQLAVSRCYATTTSPDCPITNSSNSSNSTPTLTPKQRITAFKDKLNAGPSFSDFVSGGGASNDSVPLDPTEAYSLKTALVGPPGKKKQIIRLPSWLKTPIPDSPNFRRIKSDLRGLNLHTVCEEARCPNISDCWGGSSKSAATATIMLMGDTCTRGCRFCSVKTSRTPPPLDPHEPENTAEALSRWGLGYVVMTSVDRDDLADGGARHVAETVRKVKQKAPNILLECLTGDYAGDLEMVALVATSGLDVFAHNVETVEALTPFVRDRRATFQQSLRVLKAAKEAKPELITKTSIMLGLGETEAQLWETLKALRAVDVDVVTFGQYMRPTKRHMAVHEYVRPDVFDSWKERALEMGFLYCASGPLVRSSYKAGEAFIENVLKKRRGEGADGSGGSSTRREDVERLVAGGVVR.

A mitochondrion-targeting transit peptide spans 1 to 37 (MVASARGLRTLHSAHSSISALPASTVPRLQLAVSRCY). The [4Fe-4S] cluster site is built by cysteine 150, cysteine 155, cysteine 161, cysteine 181, cysteine 185, cysteine 188, and serine 396. Residues 164–385 (GSSKSAATAT…KERALEMGFL (222 aa)) form the Radical SAM core domain.

It belongs to the radical SAM superfamily. Lipoyl synthase family. The cofactor is [4Fe-4S] cluster.

The protein localises to the mitochondrion. It catalyses the reaction [[Fe-S] cluster scaffold protein carrying a second [4Fe-4S](2+) cluster] + N(6)-octanoyl-L-lysyl-[protein] + 2 oxidized [2Fe-2S]-[ferredoxin] + 2 S-adenosyl-L-methionine + 4 H(+) = [[Fe-S] cluster scaffold protein] + N(6)-[(R)-dihydrolipoyl]-L-lysyl-[protein] + 4 Fe(3+) + 2 hydrogen sulfide + 2 5'-deoxyadenosine + 2 L-methionine + 2 reduced [2Fe-2S]-[ferredoxin]. The protein operates within protein modification; protein lipoylation via endogenous pathway; protein N(6)-(lipoyl)lysine from octanoyl-[acyl-carrier-protein]: step 2/2. Functionally, catalyzes the radical-mediated insertion of two sulfur atoms into the C-6 and C-8 positions of the octanoyl moiety bound to the lipoyl domains of lipoate-dependent enzymes, thereby converting the octanoylated domains into lipoylated derivatives. This Paracoccidioides lutzii (strain ATCC MYA-826 / Pb01) (Paracoccidioides brasiliensis) protein is Lipoyl synthase, mitochondrial.